The primary structure comprises 341 residues: Processive diacylglycerol beta-glycosyltransferase (341 aa).

This sequence belongs to the glycosyltransferase 2 family. Mg(2+) serves as cofactor.

It localises to the cell membrane. The catalysed reaction is a 1,2-diacyl-sn-glycerol + UDP-alpha-D-glucose = a 1,2-diacyl-3-O-(beta-D-glucopyranosyl)-sn-glycerol + UDP + H(+). The enzyme catalyses a 1,2-diacyl-sn-glycerol + UDP-alpha-D-galactose = a 1,2-diacyl-3-O-(beta-D-galactosyl)-sn-glycerol + UDP + H(+). It carries out the reaction a 1,2-diacyl-3-O-(beta-D-glucopyranosyl)-sn-glycerol + UDP-alpha-D-glucose = a 1,2-diacyl-3-O-(beta-D-Glc-(1-&gt;6)-beta-D-Glc)-sn-glycerol + UDP + H(+). It catalyses the reaction a 1,2-diacyl-3-O-(beta-D-galactosyl)-sn-glycerol + UDP-alpha-D-galactose = a 1,2-diacyl-3-O-[beta-D-galactosyl-(1-&gt;6)-beta-D-galactosyl]-sn-glycerol + UDP + H(+). It participates in glycolipid metabolism; diglucosyl-diacylglycerol biosynthesis. Its activity is regulated as follows. Activated by the negatively charged lipid dioleoylphosphatidylglycerol (DOPG) and inhibited by N-(n-nonyl)deoxygalactonojirimycin (C9J). Functionally, processive glycosyltransferase involved in the biosynthesis of both the non-bilayer-prone beta-monoglycosyldiacylglycerol and the bilayer-forming membrane lipid beta-diglycosyldiacylglycerol. These components contribute to regulate the properties and stability of the membrane. Catalyzes sequentially the transfers of glucosyl or galactosyl residues from UDP-Glc or UDP-Gal to diacylglycerol (DAG) acceptor to form the corresponding beta-glycosyl-DAG (3-O-(beta-D-glycopyranosyl)-1,2-diacyl-sn-glycerol), which then acts as acceptor to give beta-diglycosyl-DAG product (3-O-(beta-D-glycopyranosyl-beta-(1-&gt;6)-D-glycopyranosyl)-1,2-diacyl-sn-glycerol). Dioleoylglycerol (DOG) is a preferred sugar acceptor than 3-O-(beta-D-glucopyranosyl)-1,2-dioleoyl-sn-glycerol. This is Processive diacylglycerol beta-glycosyltransferase from Mycoplasma genitalium (strain ATCC 33530 / DSM 19775 / NCTC 10195 / G37) (Mycoplasmoides genitalium).